The primary structure comprises 200 residues: uncharacterized protein (200 aa).

An N-terminal signal peptide occupies residues 1–24 (MAIDKLPLLLFLSILLCLNRPVLS). 5 N-linked (GlcNAc...) asparagine glycosylation sites follow: Asn-44, Asn-72, Asn-99, Asn-124, and Asn-135. Residue Ser-174 is the site of GPI-anchor amidated serine attachment. Positions 175–200 (NGFTFGIGLVSYLVIFMYSSFCFFLF) are cleaved as a propeptide — removed in mature form.

This sequence belongs to the UPF0277 family.

Its subcellular location is the cell membrane. This is an uncharacterized protein from Arabidopsis thaliana (Mouse-ear cress).